The following is a 702-amino-acid chain: Phosphoglycerol transferase I (702 aa).

3 helical membrane passes run 5–24, 73–95, and 102–124; these read LLVS…RLAW, GYIA…VRIR, and GGGA…SPLY.

This sequence belongs to the OpgB family.

It localises to the cell inner membrane. The enzyme catalyses a phosphatidylglycerol + a membrane-derived-oligosaccharide D-glucose = a 1,2-diacyl-sn-glycerol + a membrane-derived-oligosaccharide 6-(glycerophospho)-D-glucose.. It participates in glycan metabolism; osmoregulated periplasmic glucan (OPG) biosynthesis. Transfers a phosphoglycerol residue from phosphatidylglycerol to the membrane-bound nascent glucan backbones. This is Phosphoglycerol transferase I from Xanthomonas axonopodis pv. citri (strain 306).